A 322-amino-acid chain; its full sequence is Acetyl-coenzyme A carboxylase carboxyl transferase subunit alpha (322 aa).

The 255-residue stretch at 39-293 (RLASKSQQLT…KRALAESLRQ (255 aa)) folds into the CoA carboxyltransferase C-terminal domain.

It belongs to the AccA family. In terms of assembly, acetyl-CoA carboxylase is a heterohexamer composed of biotin carboxyl carrier protein (AccB), biotin carboxylase (AccC) and two subunits each of ACCase subunit alpha (AccA) and ACCase subunit beta (AccD).

It localises to the cytoplasm. It catalyses the reaction N(6)-carboxybiotinyl-L-lysyl-[protein] + acetyl-CoA = N(6)-biotinyl-L-lysyl-[protein] + malonyl-CoA. It participates in lipid metabolism; malonyl-CoA biosynthesis; malonyl-CoA from acetyl-CoA: step 1/1. In terms of biological role, component of the acetyl coenzyme A carboxylase (ACC) complex. First, biotin carboxylase catalyzes the carboxylation of biotin on its carrier protein (BCCP) and then the CO(2) group is transferred by the carboxyltransferase to acetyl-CoA to form malonyl-CoA. The chain is Acetyl-coenzyme A carboxylase carboxyl transferase subunit alpha from Ralstonia pickettii (strain 12J).